Reading from the N-terminus, the 315-residue chain is DNA-directed RNA polymerase subunit alpha (315 aa).

The tract at residues 1-228 is alpha N-terminal domain (alpha-NTD); sequence MAQFQIECVE…DLFNPLKDIS (228 aa). The tract at residues 243–315 is alpha C-terminal domain (alpha-CTD); that stretch reads TAQIPIEELQ…LPQERSSKHN (73 aa).

Belongs to the RNA polymerase alpha chain family. In terms of assembly, homodimer. In cyanobacteria the RNAP catalytic core is composed of 2 alpha, 1 beta, 1 beta', 1 gamma and 1 omega subunit. When a sigma factor is associated with the core the holoenzyme is formed, which can initiate transcription.

The catalysed reaction is RNA(n) + a ribonucleoside 5'-triphosphate = RNA(n+1) + diphosphate. Functionally, DNA-dependent RNA polymerase catalyzes the transcription of DNA into RNA using the four ribonucleoside triphosphates as substrates. This is DNA-directed RNA polymerase subunit alpha from Nostoc sp. (strain PCC 7120 / SAG 25.82 / UTEX 2576).